We begin with the raw amino-acid sequence, 559 residues long: Prolyl 4-hydroxylase subunit alpha-1 (559 aa).

An N-terminal signal peptide occupies residues 1-16 (MRLALLVLATIGYAVA). N-linked (GlcNAc...) asparagine glycosylation occurs at N158. In terms of domain architecture, Fe2OG dioxygenase spans 404-512 (TAEELQIANY…KWVSNKWIHE (109 aa)). Fe cation is bound by residues H422, D424, and H493. K503 provides a ligand contact to 2-oxoglutarate.

This sequence belongs to the P4HA family. Heterotetramer of two alpha chains and two beta chains. Exists either as a phy-1(2)/pdi-2(2) tetramer or as a phy-1/phy-2/pdi-2(2) tetramer. Requires Fe(2+) as cofactor. L-ascorbate serves as cofactor.

Its subcellular location is the endoplasmic reticulum lumen. It carries out the reaction L-prolyl-[collagen] + 2-oxoglutarate + O2 = trans-4-hydroxy-L-prolyl-[collagen] + succinate + CO2. In terms of biological role, catalyzes the post-translational formation of 4-hydroxyproline in -Xaa-Pro-Gly- sequences in collagens and other proteins. In Caenorhabditis elegans, this protein is Prolyl 4-hydroxylase subunit alpha-1 (dpy-18).